A 174-amino-acid polypeptide reads, in one-letter code: ATP-dependent protease subunit HslV (174 aa).

Residue T2 is part of the active site. Residues G157, C160, and T163 each contribute to the Na(+) site.

It belongs to the peptidase T1B family. HslV subfamily. In terms of assembly, a double ring-shaped homohexamer of HslV is capped on each side by a ring-shaped HslU homohexamer. The assembly of the HslU/HslV complex is dependent on binding of ATP.

It is found in the cytoplasm. The catalysed reaction is ATP-dependent cleavage of peptide bonds with broad specificity.. Allosterically activated by HslU binding. In terms of biological role, protease subunit of a proteasome-like degradation complex believed to be a general protein degrading machinery. The sequence is that of ATP-dependent protease subunit HslV from Shewanella pealeana (strain ATCC 700345 / ANG-SQ1).